A 395-amino-acid chain; its full sequence is Succinyl-diaminopimelate desuccinylase (395 aa).

Histidine 81 provides a ligand contact to Zn(2+). Aspartate 83 is a catalytic residue. Position 114 (aspartate 114) interacts with Zn(2+). Residue glutamate 146 is the Proton acceptor of the active site. The Zn(2+) site is built by glutamate 147, glutamate 175, and histidine 364.

Belongs to the peptidase M20A family. DapE subfamily. In terms of assembly, homodimer. Zn(2+) serves as cofactor. The cofactor is Co(2+).

The catalysed reaction is N-succinyl-(2S,6S)-2,6-diaminopimelate + H2O = (2S,6S)-2,6-diaminopimelate + succinate. It functions in the pathway amino-acid biosynthesis; L-lysine biosynthesis via DAP pathway; LL-2,6-diaminopimelate from (S)-tetrahydrodipicolinate (succinylase route): step 3/3. Its function is as follows. Catalyzes the hydrolysis of N-succinyl-L,L-diaminopimelic acid (SDAP), forming succinate and LL-2,6-diaminopimelate (DAP), an intermediate involved in the bacterial biosynthesis of lysine and meso-diaminopimelic acid, an essential component of bacterial cell walls. The polypeptide is Succinyl-diaminopimelate desuccinylase (Parvibaculum lavamentivorans (strain DS-1 / DSM 13023 / NCIMB 13966)).